Here is a 524-residue protein sequence, read N- to C-terminus: Lysine--tRNA ligase (524 aa).

Positions 431 and 438 each coordinate Mg(2+).

Belongs to the class-II aminoacyl-tRNA synthetase family. In terms of assembly, homodimer. Mg(2+) serves as cofactor.

The protein resides in the cytoplasm. It carries out the reaction tRNA(Lys) + L-lysine + ATP = L-lysyl-tRNA(Lys) + AMP + diphosphate. In Chlamydia muridarum (strain MoPn / Nigg), this protein is Lysine--tRNA ligase (lysS).